Consider the following 396-residue polypeptide: Elongation factor Tu 1 (396 aa).

Residues K10 to D206 form the tr-type G domain. The interval G19–T26 is G1. Position 19–26 (G19–T26) interacts with GTP. A Mg(2+)-binding site is contributed by T26. Residues G60–N64 form a G2 region. Residues D81–G84 are G3. GTP-binding positions include D81–H85 and N136–D139. The G4 stretch occupies residues N136–D139. The interval S174 to K176 is G5.

It belongs to the TRAFAC class translation factor GTPase superfamily. Classic translation factor GTPase family. EF-Tu/EF-1A subfamily. As to quaternary structure, monomer.

Its subcellular location is the cytoplasm. The catalysed reaction is GTP + H2O = GDP + phosphate + H(+). Functionally, GTP hydrolase that promotes the GTP-dependent binding of aminoacyl-tRNA to the A-site of ribosomes during protein biosynthesis. This is Elongation factor Tu 1 from Caulobacter sp. (strain K31).